The following is a 127-amino-acid chain: MSTPKDLRYSEEHEWVKVEGEKVRIGITHFAQSELGDIVFVELPEVGDKITADEPFGSVESVKTVSELYAPINGTIVEVNDELDDSPEFVNDSPYEKAWMIVVEPADTSEIENLMTAEQYEEMTKED.

The Lipoyl-binding domain maps to 22–104; that stretch reads KVRIGITHFA…YEKAWMIVVE (83 aa). Position 63 is an N6-lipoyllysine (Lys63).

The protein belongs to the GcvH family. The glycine cleavage system is composed of four proteins: P, T, L and H. The cofactor is (R)-lipoate.

Functionally, the glycine cleavage system catalyzes the degradation of glycine. The H protein shuttles the methylamine group of glycine from the P protein to the T protein. Is also involved in protein lipoylation via its role as an octanoyl/lipoyl carrier protein intermediate. The polypeptide is Glycine cleavage system H protein (Bacillus pumilus (strain SAFR-032)).